We begin with the raw amino-acid sequence, 713 residues long: Constitutive lysine decarboxylase (713 aa).

N6-(pyridoxal phosphate)lysine is present on Lys367.

It belongs to the Orn/Lys/Arg decarboxylase class-I family. As to quaternary structure, homodecamer; built of five dimers associated in a 5-fold symmetrical double-ring. Pyridoxal 5'-phosphate serves as cofactor.

The catalysed reaction is L-lysine + H(+) = cadaverine + CO2. Its function is as follows. Plays a role in lysine utilization by acting as a lysine decarboxylase. The chain is Constitutive lysine decarboxylase (ldcC) from Escherichia coli (strain K12).